Reading from the N-terminus, the 1804-residue chain is MKAGSGDQGSPPCFLRFPRPVRVVSGAEAELKCVVLGEPPPTVVWEKGGQQLVASERLSFPEDGAEHGLLLSGALPTDAGVYVCRARNAAGEAYAAAAVTVLEPPAPEPEPESSECPLPTPGTGEGAPKFLTGPQSQWVLRGEEVVLTCQVGGLPEPKLYWEKDGMALDEVWDSSHFKLEPGRGASDEGASLTLRILAARLPDSGVYVCHARNAHGHAQAGALLQVHQPRESPPQDPDENPKPVLEPLKGAPKTFWVNEGKHAKFRCYVMGKPEPEIEWHLEGRPLLPDRRRLMYRDRDGGFVLKVLYCQAKDRGLYVCAARNSAGQTLSAVQLHVKEPRLRFTRPLQDVEGREHGIVVLECKVPNSRIPTAWFREDQRLLPCRKYEQIEEGAVRRLVIHKLKADDDGVYLCEMRGRVRTVANVTVKGPILKRLPRKLDVLEGENAVLLVETQEAGVQGCWSRDGEDLPDTCQSSCGHMHALVLPGVTREDAGEITFSLGNSRTTTLLRVKCVKHSPPGPPVMVEMFKGQKNKVLLTWKPPEPPPETSFIYRLERQEVGSDDWIQCFSIEKAGAVEVPGDCVPTEGDYHFRICTVSEHGRSPHVVFNGSAHLVPTARLVSGLEDVQVYDGEDAVFSLDLSAIIQGSWFLNGEQLQSNEPEGQVEPGALRYRIEQKGLQHRLILQAVKHRDSGALVGFSCPGVQDSAALTIQESSVHILSPQDKVSLTFTTSERVVLTCELSRVDFPATWYKDGQKVEESESLIVKTEGRKHRLILPEAQVRDSGEFECRTEGVSAFFGVTVQDPPVHIVNPQEHVFVHAITSECVRLTCEVDREDTTVHWYKDGQEVEESDIIVLENKGPHHRLVLPAARPSDGGEFQCVAGDERAYFTVTITDVFSWIVYPSSEVHVAAVRLERVVLTCELCRPWAEVRWTKDGEEVVESPALLLEKEDTIRRLVLPSVQLEDSGEYLCEIHDESASFTITVTEPPVRIIYPQDEVTLHAVSLECVVLTCELSREDAPVRWYKDGLEVEESEALVLQSDGPRRRLVLPAAQPEDGGEFVCDAGDDSAFFTVTVTAPPERIVHPAARSLDLQFGAPGHVELRCEVAPAGSQVRWYKDGLEVEVSDALQLGAEGPARTLTLPHAQPEDAGEYVCETRDEAVTFNVSLAELPVQFLAPEAAPNPLCVVPGEPVVLSCELSRASAQVFWSHNGSPVQQGEGLELRAEGPRRILCIQAADLAHTGVYTCQSGASPGAPSLSFNVQVAELPPVKLVSELTPLTVHEGDDATFQCEVSPPDAEVTWLRNGAVITAGPQLEMVQNGSSRTLIIRGCQLKDAGTVTARAGAADTSARLHVRETELLFLRRLQDVRAEEGQDVHLEVETGRVGAAGTVRWIRGGEPLPLDSRLTTAQDGHVHRLSIHGVLLTDQGTYGCESRHDRTLARLSVRPRQLRELRPLEDVTVHEGGSATFQLELSQEGVTGEWAQGGVRLHPGPKCHIQSEGRTHRLVLSGLGLADSGCVSFTADTLRCAARLTVREVPVTIVQGPQDLEVTEGDTATFECELSQTLADVIWEKDGQALSLSPRLRLQALGTRRLLLLRRCCSSDAGTYSCVVGTARSEPARLTVREREVSVLRELRSVSAREGDGATFECTVSETEITGRWELGGRALRPGGRVRIRQEGKKHILVLSELRTEDTGEVCFQAGPAQSLARLEVEALPLQMCRRPPREKTVLVNRRAVLEVTVSRPGGHVCWMREGVELCPGNKYETRRHGTTHSLVIHDVRPEDQGTYSCQAGQDSADTQLLVDGD.

Ser-10 is modified (phosphoserine). 4 consecutive Ig-like domains span residues 12 to 100 (PCFL…AAVT), 128 to 225 (PKFL…ALLQ), 241 to 330 (PKPV…QTLS), and 339 to 425 (PRLR…ANVT). Positions 17–19 (FPR) are interaction with TTN. Cys-33 and Cys-84 are oxidised to a cystine. The segment at 85–94 (RARNAAGEAY) is interaction with TTN. Cys-149 and Cys-209 form a disulfide bridge. The disordered stretch occupies residues 227–249 (HQPRESPPQDPDENPKPVLEPLK). Disulfide bonds link Cys-267/Cys-319 and Cys-362/Cys-412. One can recognise a Fibronectin type-III domain in the interval 517-615 (PPGPPVMVEM…FNGSAHLVPT (99 aa)). 10 consecutive Ig-like domains span residues 720–800 (PQDK…FGVT), 804–891 (PPVH…FTVT), 902–982 (PSSE…FTIT), 986–1075 (PPVR…VTVT), 1078–1165 (PERI…FNVS), 1176–1261 (PEAA…FNVQ), 1266–1442 (PPVK…ARLS), 1536–1621 (PVTI…ARLT), 1625–1694 (REVS…EDTG), and 1702–1798 (PAQS…ADTQ). Disulfide bonds link Cys-738-Cys-788, Cys-829-Cys-879, Cys-920-Cys-970, Cys-1011-Cys-1061, Cys-1103-Cys-1153, Cys-1195-Cys-1245, Cys-1289-Cys-1430, and Cys-1558-Cys-1608.

Component of the 3M complex, composed of core components CUL7, CCDC8 and OBSL1. Interacts with CCDC8. Interacts with CUL7; the interaction is direct. Interacts with FBXW8. Interacts (via N-terminal Ig-like domain) with TTN/titin (via C-terminal Ig-like domain); the interaction is direct.

The protein localises to the cytoplasm. It is found in the perinuclear region. Its subcellular location is the golgi apparatus. Its function is as follows. Core component of the 3M complex, a complex required to regulate microtubule dynamics and genome integrity. It is unclear how the 3M complex regulates microtubules, it could act by controlling the level of a microtubule stabilizer. Acts as a regulator of the Cul7-RING(FBXW8) ubiquitin-protein ligase, playing a critical role in the ubiquitin ligase pathway that regulates Golgi morphogenesis and dendrite patterning in brain. Required to localize CUL7 to the Golgi apparatus in neurons. The sequence is that of Obscurin-like protein 1 (Obsl1) from Mus musculus (Mouse).